A 118-amino-acid polypeptide reads, in one-letter code: Cycloviolacin-O11 (118 aa).

The N-terminal stretch at 1–22 (MEMKNMVVGLFLIAAFALPALA) is a signal peptide. A propeptide spanning residues 23–84 (TSFEKDFITH…THSNSINALG (62 aa)) is cleaved from the precursor. The cyclopeptide (Gly-Asn) cross-link spans 85-115 (GTLPCGESCVWIPCISAVVGCSCKSKVCYKN). Cystine bridges form between Cys89-Cys105, Cys93-Cys107, and Cys98-Cys112. Residues 116 to 118 (SLA) constitute a propeptide that is removed on maturation.

Cycloviolacin-O11 is a cyclic peptide. As to expression, expressed in leaves, petals and petioles but not in roots and runners (at protein level).

Its function is as follows. Probably participates in a plant defense mechanism. The protein is Cycloviolacin-O11 (Voc2) of Viola odorata (Sweet violet).